A 339-amino-acid polypeptide reads, in one-letter code: MAIPLPLTSCSPISTSSSISRTSFVPLTLRNRTFFSNQNYSRRVLISCSSSLSSDNGSSPDSMNGNGNGNGSSLNGQSSFPRLPSFDGTSKPPLKWRRVLLKVSGEALAGDEEQNIDPKVTMAIAREVAAVTRLGIEVAIVVGGGNIFRGSTWAGCSGLDRSSADYIGMLATVMNAIFLQATMESIGIPTRVQTAFRMSEVAEPYIRRRAIRHLEKGRVVIFAAGTGNPFFTTDTAAALRCAEINAEVVLKATNVDGVFDDDPKRNPNARLLDSLTYQEVTSKDLSVMDMTAITLCQENNIPVVVFNLSEPGNIAKAIKGERVGTLIGGTWNSIVTTTS.

The N-terminal 53 residues, 1–53, are a transit peptide targeting the chloroplast; it reads MAIPLPLTSCSPISTSSSISRTSFVPLTLRNRTFFSNQNYSRRVLISCSSSLS. Residues 52 to 79 show a composition bias toward low complexity; that stretch reads LSSDNGSSPDSMNGNGNGNGSSLNGQSS. Residues 52 to 89 are disordered; it reads LSSDNGSSPDSMNGNGNGNGSSLNGQSSFPRLPSFDGT. 102–105 contacts ATP; it reads KVSG. The segment at 110 to 115 is involved in allosteric activation by GTP; it reads GDEEQN. Glycine 144 is a binding site for UMP. ATP is bound by residues glycine 145 and arginine 149. Aspartate 165 is a binding site for UMP. Residues 180-184 and 189-191 each bind ATP; these read QATME and PTR. Residue 226–233 participates in UMP binding; it reads TGNPFFTT. Positions 253, 259, and 262 each coordinate ATP.

The protein belongs to the UMP kinase family. In terms of assembly, homomultimer. Homohexamer. Forms RNA-containing megadalton-sized complexes. As to expression, expressed exclusively in leaves, but not in roots.

It is found in the plastid. The protein localises to the chloroplast stroma. It carries out the reaction UMP + ATP = UDP + ADP. It functions in the pathway pyrimidine metabolism; CTP biosynthesis via de novo pathway; UDP from UMP (UMPK route): step 1/1. Functionally, catalyzes the reversible phosphorylation of UMP to UDP. Required for specific post-transcriptional processes of many plastid transcripts (e.g. PSI (PsaA, PsaF), PSII (D1, CP43, CP47), Cytochrome b(6)f (Cytb(6)), ATP synthase (AtpC), LHCs (LHCa3, LHCb2), and NDH (NdhH)), thus being essential for retaining photosynthetic activity in chloroplasts. Associates with group II introns of the plastid transcripts trnG-UCC, trnV-UAC, petB, petD and ndhA to stabilize corresponding precursor RNAs. The sequence is that of Uridylate kinase PUMPKIN, chloroplastic from Arabidopsis thaliana (Mouse-ear cress).